The sequence spans 686 residues: Cation channel sperm-associated protein 1 (686 aa).

Over residues 1-15 the composition is skewed to basic and acidic residues; the sequence is MDQSSRRDESYHETH. 4 disordered regions span residues 1–57, 97–177, 207–271, and 289–318; these read MDQS…QQPY, TLPN…NRDH, DHHH…KSTA, and QSRESLRESASLSEGEDHVQKRKKAQRAHK. Over 1–351 the chain is Cytoplasmic; the sequence is MDQSSRRDES…QMILSLTQSL (351 aa). A compositionally biased stretch (basic residues) spans 25-35; the sequence is SHPHPHPHPTL. The span at 128–142 shows a compositional bias: basic and acidic residues; the sequence is DPNHHPHQDDPHRPS. Positions 147-160 are enriched in polar residues; that stretch reads HPSSTGSHQGTTHQ. Basic residues-rich tracts occupy residues 211 to 229 and 235 to 244; these read EGHHAHSHHGEHPHHKEQR and HMHHHIHHRS. The segment covering 245–271 has biased composition (polar residues); it reads PSASQLSHKSHSTLATSPSHVGSKSTA. Residues 308 to 318 show a composition bias toward basic residues; that stretch reads QKRKKAQRAHK. Residues 352–373 traverse the membrane as a helical segment; sequence GFETFIFIVVCLNTVILVAQTF. The Extracellular segment spans residues 374 to 382; sequence TELEIRGEW. Residues 383–404 form a helical membrane-spanning segment; that stretch reads YFMVLDSIFLSIYVLEAVLKLI. The Cytoplasmic segment spans residues 405–412; sequence ALGLEYFY. A helical membrane pass occupies residues 413-435; that stretch reads DPWNNLDFFIMVMAVLDFVLLQI. The Extracellular segment spans residues 436–446; it reads NSLSYSFYNHS. Residues 447 to 469 traverse the membrane as a helical segment; it reads LFRILKVFKSMRALRAIRVLRRL. Residues 470–487 are Cytoplasmic-facing; that stretch reads SILTSLHEVAGTLSGSLP. The helical transmembrane segment at 488-510 threads the bilayer; the sequence is SITAILTLMFTCLFLFSVVLRAL. Residues 511-521 lie on the Extracellular side of the membrane; that stretch reads FQDSDPKRFQN. An intramembrane region (helical; Pore-forming) is located at residues 522–534; that stretch reads IFTTLFTLFTMLT. The Extracellular portion of the chain corresponds to 535–551; the sequence is LDDWSLIYIDNRAQGAW. A helical transmembrane segment spans residues 552-577; that stretch reads YIIPILMIYIVIQYFIFLNLVIAVLV. The Cytoplasmic portion of the chain corresponds to 578–686; sequence DNFQMALLKG…FEAGDDDYGK (109 aa).

The protein belongs to the cation channel sperm-associated (TC 1.A.1.19) family. As to quaternary structure, component of the CatSper complex or CatSpermasome composed of the core pore-forming members CATSPER1, CATSPER2, CATSPER3 and CATSPER4 as well as auxiliary members CATSPERB, CATSPERG2, CATSPERD, CATSPERE, CATSPERZ, C2CD6/CATSPERT, SLCO6C1, TMEM249, TMEM262 and EFCAB9. HSPA1 may be an additional auxiliary complex member. The core complex members CATSPER1, CATSPER2, CATSPER3 and CATSPER4 form a heterotetrameric channel. The auxiliary CATSPERB, CATSPERG2, CATSPERD and CATSPERE subunits form a pavilion-like structure over the pore which stabilizes the complex through interactions with CATSPER4, CATSPER3, CATSPER1 and CATSPER2 respectively. SLCO6C1 interacts with CATSPERE, and TMEM262/CATSPERH interacts with CATSPERB, further stabilizing the complex. C2CD6/CATSPERT interacts at least with CATSPERD and is required for targeting the CatSper complex in the flagellar membrane. Interacts with Ca(v)3.3/CACNA1I, leading to suppression of T-type calcium channel activity. As to expression, testis-specific.

It localises to the cell projection. The protein localises to the cilium. It is found in the flagellum membrane. The catalysed reaction is Ca(2+)(in) = Ca(2+)(out). With respect to regulation, activated by intracellular alkalinization. In contrast to the human ortholog, not activated by progesterone. Functionally, pore-forming subunit of the CatSper complex, a sperm-specific voltage-gated calcium channel that plays a central role in sperm cell hyperactivation. Controls calcium entry to mediate the hyperactivated motility, a step needed for sperm motility which is essential late in the preparation of sperm for fertilization. The chain is Cation channel sperm-associated protein 1 (Catsper1) from Mus musculus (Mouse).